The chain runs to 293 residues: Homoserine kinase (293 aa).

84-94 provides a ligand contact to ATP; sequence PLSRGLGSSSA.

Belongs to the GHMP kinase family. Homoserine kinase subfamily.

The protein localises to the cytoplasm. The catalysed reaction is L-homoserine + ATP = O-phospho-L-homoserine + ADP + H(+). It functions in the pathway amino-acid biosynthesis; L-threonine biosynthesis; L-threonine from L-aspartate: step 4/5. In terms of biological role, catalyzes the ATP-dependent phosphorylation of L-homoserine to L-homoserine phosphate. The sequence is that of Homoserine kinase from Aliarcobacter butzleri (strain RM4018) (Arcobacter butzleri).